Reading from the N-terminus, the 122-residue chain is Allatotropin (122 aa).

A signal peptide spans 1–23 (MRVILAITLLFVAGSFIATASKG). The propeptide occupies 24–40 (RNYPRFFKHRMKLREIR). Position 53 is a phenylalanine amide (Phe53). A propeptide spanning residues 57–122 (ESPAERIPDL…GDDSKKGTIA (66 aa)) is cleaved from the precursor.

In terms of tissue distribution, expressed in brain and ventral ganglia but not in the retrocerebral complex (at protein level).

The protein resides in the secreted. Functionally, neuropeptide stimulator of juvenile hormone synthesis. This chain is Allatotropin, found in Camponotus floridanus (Florida carpenter ant).